A 376-amino-acid polypeptide reads, in one-letter code: Ribonucleoside-diphosphate reductase 1 subunit beta (376 aa).

Residues aspartate 85, glutamate 116, and histidine 119 each contribute to the Fe cation site. The active site involves tyrosine 123. 3 residues coordinate Fe cation: glutamate 205, glutamate 239, and histidine 242.

It belongs to the ribonucleoside diphosphate reductase small chain family. In terms of assembly, tetramer of two alpha (R1) and two beta (R2) subunits. The B1 protein is a dimer of alpha subunits. A radical transfer pathway occurs between Tyr-123 of R2 and R1. Fe cation serves as cofactor.

The catalysed reaction is a 2'-deoxyribonucleoside 5'-diphosphate + [thioredoxin]-disulfide + H2O = a ribonucleoside 5'-diphosphate + [thioredoxin]-dithiol. Functionally, provides the precursors necessary for DNA synthesis. Catalyzes the biosynthesis of deoxyribonucleotides from the corresponding ribonucleotides. R2 contains the tyrosyl radical required for catalysis. The sequence is that of Ribonucleoside-diphosphate reductase 1 subunit beta (nrdB) from Salmonella typhimurium (strain LT2 / SGSC1412 / ATCC 700720).